We begin with the raw amino-acid sequence, 381 residues long: Bifunctional polyhydroxybutyrate synthase / ABC transporter periplasmic binding protein (381 aa).

Positions 1 to 22 are cleaved as a signal peptide; that stretch reads MSKTFARSSLCALSMTIMTAHA.

It belongs to the bacterial solute-binding protein PotD/PotF family.

It is found in the periplasm. It catalyses the reaction (3R)-3-hydroxybutanoyl-CoA + [(3R)-hydroxybutanoate](n) = [(3R)-hydroxybutanoate](n+1) + CoA. Catalyzes the formation of short polymers of R-3-hydroxybutyrate (cPHB). Involved in natural transformation. Probably part of the ABC transporter complex YdcSTUV. During natural transformation, may bind dsDNA and convey it to the inner membrane channel formed by YdcV. This Escherichia coli (strain K12) protein is Bifunctional polyhydroxybutyrate synthase / ABC transporter periplasmic binding protein (ydcS).